Reading from the N-terminus, the 267-residue chain is MRINISLSSLFERLSKLSSRSIAITCGVVLASAIAFPIIRRDYQTFLEVGPSYAPQNFRGYIIVCVLSLFRQEQKGLAIYDRLPEKRRWLADLPFREGTRPSITSHIIQRQRTQLVDQEFATRELIDKVIPRVQARHTDKTFLSTSKFEFHAKAIFLLPSIPINDPLNIPSHDTVRRTKREIAHMHDYHDCTLHLALAAQDGKEVLKKGWGQRHPLAGPGVPGPPTEWTFLYAPRNEEEARVVEMIVEASIGYMTNDPAGKIVENAK.

The N-linked (GlcNAc...) asparagine glycan is linked to asparagine 4. A helical membrane pass occupies residues 17–39 (LSSRSIAITCGVVLASAIAFPII).

This sequence belongs to the fungal luciferase family.

Its subcellular location is the membrane. It carries out the reaction 3-hydroxyhispidin + O2 = (E)-caffeoylpyruvate + hnu + CO2. The catalysed reaction is 3-hydroxyhispidin + O2 = 4-[(E)-2-(3,4-dihydroxyphenyl)ethenyl]-1,7-dihydroxy-2,3,5-trioxabicyclo[2.2.2]oct-7-en-6-one. In terms of biological role, luciferase; part of the gene cluster that mediates the fungal bioluminescence cycle. Uses the fungal luciferin 3-hydroxyhispidin as a substrate to produce an endoperoxide as a high-energy intermediate with decomposition that yields oxyluciferin (also known as caffeoylpyruvate) and light emission. The fungal bioluminescence cycle begins with the hispidin synthetase that catalyzes the formation of hispidin which is further hydroxylated by the hispidin-3-hydroxylase, yielding the fungal luciferin 3-hydroxyhispidin. The luciferase then produces an endoperoxide as a high-energy intermediate with decomposition that yields oxyluciferin and light emission. Oxyluciferin can be recycled to caffeic acid by caffeoylpyruvate hydrolase. The polypeptide is Luciferase (Neonothopanus nambi (Agaricus nambi)).